Here is a 479-residue protein sequence, read N- to C-terminus: Probable glycine dehydrogenase (decarboxylating) subunit 2 (479 aa).

Position 265 is an N6-(pyridoxal phosphate)lysine (lysine 265).

It belongs to the GcvP family. C-terminal subunit subfamily. As to quaternary structure, the glycine cleavage system is composed of four proteins: P, T, L and H. In this organism, the P 'protein' is a heterodimer of two subunits. Pyridoxal 5'-phosphate is required as a cofactor.

It catalyses the reaction N(6)-[(R)-lipoyl]-L-lysyl-[glycine-cleavage complex H protein] + glycine + H(+) = N(6)-[(R)-S(8)-aminomethyldihydrolipoyl]-L-lysyl-[glycine-cleavage complex H protein] + CO2. Functionally, the glycine cleavage system catalyzes the degradation of glycine. The P protein binds the alpha-amino group of glycine through its pyridoxal phosphate cofactor; CO(2) is released and the remaining methylamine moiety is then transferred to the lipoamide cofactor of the H protein. The protein is Probable glycine dehydrogenase (decarboxylating) subunit 2 of Pseudothermotoga lettingae (strain ATCC BAA-301 / DSM 14385 / NBRC 107922 / TMO) (Thermotoga lettingae).